The following is a 170-amino-acid chain: Photosystem II extrinsic protein V (170 aa).

The first 33 residues, 1 to 33 (MASLFASLGRSLIKLLIVLPVIIGLSISSPAMA), serve as a signal peptide directing secretion. 4 residues coordinate heme c: Cys70, Cys73, His74, and His125.

The protein belongs to the cytochrome c family. PsbV subfamily. As to quaternary structure, PSII is composed of 1 copy each of membrane proteins PsbA, PsbB, PsbC, PsbD, PsbE, PsbF, PsbH, PsbI, PsbJ, PsbK, PsbL, PsbM, PsbT, PsbX, PsbY, Psb30/Ycf12, peripheral proteins PsbO, CyanoQ (PsbQ), PsbU, PsbV and a large number of cofactors. It forms dimeric complexes. Heme c is required as a cofactor.

It localises to the cellular thylakoid membrane. Its function is as follows. One of the extrinsic, lumenal subunits of photosystem II (PSII). PSII is a light-driven water plastoquinone oxidoreductase, using light energy to abstract electrons from H(2)O, generating a proton gradient subsequently used for ATP formation. The extrinsic proteins stabilize the structure of photosystem II oxygen-evolving complex (OEC), the ion environment of oxygen evolution and protect the OEC against heat-induced inactivation. Low-potential cytochrome c that plays a role in the OEC of PSII. The protein is Photosystem II extrinsic protein V of Prochlorococcus marinus (strain MIT 9313).